A 1155-amino-acid chain; its full sequence is uncharacterized protein (1155 aa).

An N-terminal signal peptide occupies residues 1–19 (MNKNIFITLLISSLLLLSG). Residue cysteine 20 is the site of N-palmitoyl cysteine attachment. Cysteine 20 carries S-diacylglycerol cysteine lipidation. The next 4 helical transmembrane spans lie at 291–311 (VSAI…IGNI), 395–415 (LGFI…FLIF), 424–444 (ALIT…FMLF), and 459–479 (ISYA…SMII).

Belongs to the TrbL/VirB6 family.

It localises to the cell membrane. This is an uncharacterized protein from Rickettsia felis (strain ATCC VR-1525 / URRWXCal2) (Rickettsia azadi).